The primary structure comprises 242 residues: Glycerol-3-phosphate acyltransferase (242 aa).

6 consecutive transmembrane segments (helical) span residues 7–27, 61–81, 102–122, 135–155, 162–182, and 201–221; these read ISLLVILSLLIGYLFGSIMFA, IAIGFFEIIKSVIPFSIILLI, YYLTYLAPLAAIFGHMYPVYF, GFVFVVSPWWFLIIALTWWTI, VSLASIVCFIIFLFLPYIPWL, and DWYIIVFFAIANTILSTIIIW.

This sequence belongs to the PlsY family. In terms of assembly, probably interacts with PlsX.

It localises to the cell membrane. The catalysed reaction is an acyl phosphate + sn-glycerol 3-phosphate = a 1-acyl-sn-glycero-3-phosphate + phosphate. It participates in lipid metabolism; phospholipid metabolism. Functionally, catalyzes the transfer of an acyl group from acyl-phosphate (acyl-PO(4)) to glycerol-3-phosphate (G3P) to form lysophosphatidic acid (LPA). This enzyme utilizes acyl-phosphate as fatty acyl donor, but not acyl-CoA or acyl-ACP. The polypeptide is Glycerol-3-phosphate acyltransferase (Mycoplasmoides gallisepticum (strain R(low / passage 15 / clone 2)) (Mycoplasma gallisepticum)).